The chain runs to 92 residues: uncharacterized protein (92 aa).

A helical membrane pass occupies residues 65–86 (AVWIFWLCFLVSGLSRAFLVYF).

It localises to the membrane. This is an uncharacterized protein from Treponema pallidum (strain Nichols).